A 129-amino-acid polypeptide reads, in one-letter code: Protein yippee-like At5g53940 (129 aa).

The 98-residue stretch at 12-109 (RSYRCRFCRT…LERGRIVDEI (98 aa)) folds into the Yippee domain. Zn(2+) contacts are provided by Cys-16, Cys-19, Cys-72, and Cys-75.

Belongs to the yippee family.

This chain is Protein yippee-like At5g53940, found in Arabidopsis thaliana (Mouse-ear cress).